The chain runs to 67 residues: LPS-assembly lipoprotein LptM (67 aa).

Positions 1 to 19 (MKNVFKALTVLLTLFSLTG) are cleaved as a signal peptide. Cysteine 20 is lipidated: N-palmitoyl cysteine. Residue cysteine 20 is the site of S-diacylglycerol cysteine attachment. The interval 26-67 (LYFPPADKNAPPPTKPVETQTQSTVPDKNDRATGDGPSQVNY) is disordered. Positions 42 to 51 (VETQTQSTVP) are enriched in polar residues.

Belongs to the LptM family. As to quaternary structure, interacts with the outer membrane embedded portion of the LPS translocon formed by LptD and LptE (LptDE).

The protein resides in the cell outer membrane. In terms of biological role, component of the lipopolysaccharide (LPS) transport (Lpt) pathway that promotes efficient assembly of the outer membrane LPS translocon (LptDE) by the BAM complex. Facilitates oxidative maturation of LptD by stabilizing a conformation of the LPS translocon in which LptD can efficiently acquire native disulfide bonds, thereby activating the LPS translocon. The sequence is that of LPS-assembly lipoprotein LptM from Escherichia coli O157:H7.